A 135-amino-acid polypeptide reads, in one-letter code: Hemoglobin subunit beta-2 (135 aa).

A Globin domain is found at 2–135; it reads HWTAEEKALV…VVDALSKGYH (134 aa). The heme b site is built by H57 and H81.

This sequence belongs to the globin family. As to quaternary structure, hb 2 is a heterotetramer of two alpha and two beta-2 chains. As to expression, red blood cells (at protein level).

Its function is as follows. Involved in oxygen transport from gills to the various peripheral tissues. The chain is Hemoglobin subunit beta-2 from Somniosus microcephalus (Greenland sleeper shark).